The chain runs to 347 residues: Palmitoyltransferase ZDHHC11 (347 aa).

Topologically, residues 1 to 46 (MKEMNICGINKNWVLPEAQENNVKKFLPRPLSRVNGWSPPLHSFQA) are cytoplasmic. Residues 47 to 67 (ISWITYLAMSIVTFGIFIPFL) traverse the membrane as a helical segment. The Lumenal segment spans residues 68–75 (PYSWKYAA). The chain crosses the membrane as a helical span at residues 76-96 (NIVMGGVFIFHLIVHLIAITI). The Cytoplasmic portion of the chain corresponds to 97 to 170 (DPADTNVRLK…LNNCVGRRNY (74 aa)). A DHHC domain is found at 128-178 (QYCHLCEVTASKKAKHCSACNKCVSGFDHHCKWLNNCVGRRNYWFFFWSVA). Cys-158 serves as the catalytic S-palmitoyl cysteine intermediate. Residues 171–191 (WFFFWSVASAAVGILGVMIIL) traverse the membrane as a helical segment. The Lumenal portion of the chain corresponds to 192-234 (CYICIQYFVNPDELRTDPLYKEIISENTWLLFLSLWPVPVKTP). Residues 235–255 (IVLSIAVMALLLAIASFVMLG) form a helical membrane-spanning segment. The Cytoplasmic portion of the chain corresponds to 256–347 (HLLIFHLYLI…SPPKICHSED (92 aa)). Residues 291–306 (ELPLQKKGDLPQEKSD) are compositionally biased toward basic and acidic residues. Residues 291-332 (ELPLQKKGDLPQEKSDNWAWPKSPPRVGSQKFPVSTLSPKSS) are disordered. The segment covering 322–331 (FPVSTLSPKS) has biased composition (polar residues).

Belongs to the DHHC palmitoyltransferase family. Interacts with IRF3 and STING1; in presence of DNA viruses recruits IRF3 to STING1 promoting IRF3 phosphorylation and activation.

The protein resides in the endosome membrane. The catalysed reaction is L-cysteinyl-[protein] + hexadecanoyl-CoA = S-hexadecanoyl-L-cysteinyl-[protein] + CoA. In terms of biological role, endoplasmic reticulum-localized palmitoyltransferase that could catalyze the addition of palmitate onto various protein substrates and be involved in a variety of cellular processes. Has a palmitoyltransferase activity toward NCDN and regulates NCDN association with endosome membranes through this palmitoylation. May play a role in cell proliferation. Also has a palmitoyltransferase activity-independent function in DNA virus-triggered and CGAS-mediated innate immune response. Functions as an adapter that recruits IRF3 to STING1 to promote the activation of that key transcriptional regulator of type I interferon (IFN)-dependent immune response. In Mus musculus (Mouse), this protein is Palmitoyltransferase ZDHHC11.